Here is a 189-residue protein sequence, read N- to C-terminus: Peptidyl-tRNA hydrolase (189 aa).

Tyr-15 lines the tRNA pocket. His-20 acts as the Proton acceptor in catalysis. Phe-66, Asn-68, and Asn-114 together coordinate tRNA.

Belongs to the PTH family. In terms of assembly, monomer.

It is found in the cytoplasm. It carries out the reaction an N-acyl-L-alpha-aminoacyl-tRNA + H2O = an N-acyl-L-amino acid + a tRNA + H(+). Its function is as follows. Hydrolyzes ribosome-free peptidyl-tRNAs (with 1 or more amino acids incorporated), which drop off the ribosome during protein synthesis, or as a result of ribosome stalling. Functionally, catalyzes the release of premature peptidyl moieties from peptidyl-tRNA molecules trapped in stalled 50S ribosomal subunits, and thus maintains levels of free tRNAs and 50S ribosomes. This is Peptidyl-tRNA hydrolase from Streptococcus pyogenes serotype M1.